A 360-amino-acid polypeptide reads, in one-letter code: Peptide chain release factor 1 (360 aa).

Gln235 bears the N5-methylglutamine mark.

Belongs to the prokaryotic/mitochondrial release factor family. Post-translationally, methylated by PrmC. Methylation increases the termination efficiency of RF1.

It is found in the cytoplasm. Its function is as follows. Peptide chain release factor 1 directs the termination of translation in response to the peptide chain termination codons UAG and UAA. This Blochmanniella pennsylvanica (strain BPEN) protein is Peptide chain release factor 1.